The chain runs to 669 residues: Collagen alpha-1(II) chain (669 aa).

Residues P3 and P12 each carry the 4-hydroxyproline modification. Residues 318–327 (XXXXXXXGAP) show a composition bias toward low complexity. 3 disordered regions span residues 318 to 360 (XXXX…XXXX), 405 to 438 (XXXX…XXXX), and 638 to 669 (XXGF…AGPR). 4-hydroxyproline occurs at positions 336 and 345. Low complexity-rich tracts occupy residues 339–360 (AGFA…XXXX) and 405–420 (XXXX…NGNP). P413 bears the 3-hydroxyproline mark. Residues P414, P420, and P426 each carry the 4-hydroxyproline modification. Low complexity-rich tracts occupy residues 429-438 (AGKXXXXXXX) and 638-647 (XXGFTGLQGL). P648 is modified (4-hydroxyproline). At P650 the chain carries 3-hydroxyproline.

The protein belongs to the fibrillar collagen family. In terms of assembly, homotrimers of alpha 1(II) chains. In terms of processing, contains mostly 4-hydroxyproline. Prolines at the third position of the tripeptide repeating unit (G-X-P) are 4-hydroxylated in some or all of the chains. Contains 3-hydroxyproline at a few sites. This modification occurs on the first proline residue in the sequence motif Gly-Pro-Hyp, where Hyp is 4-hydroxyproline.

Its subcellular location is the secreted. It localises to the extracellular space. The protein localises to the extracellular matrix. Functionally, type II collagen is specific for cartilaginous tissues. It is essential for the normal embryonic development of the skeleton, for linear growth and for the ability of cartilage to resist compressive forces. This Mammut americanum (American mastodon) protein is Collagen alpha-1(II) chain.